The following is a 240-amino-acid chain: DNA repair protein RecO (240 aa).

Belongs to the RecO family.

Functionally, involved in DNA repair and RecF pathway recombination. The sequence is that of DNA repair protein RecO from Actinobacillus pleuropneumoniae serotype 7 (strain AP76).